Reading from the N-terminus, the 145-residue chain is D-aminoacyl-tRNA deacylase (145 aa).

The Gly-cisPro motif, important for rejection of L-amino acids motif lies at 137–138 (GP).

This sequence belongs to the DTD family. Homodimer.

Its subcellular location is the cytoplasm. It carries out the reaction glycyl-tRNA(Ala) + H2O = tRNA(Ala) + glycine + H(+). The catalysed reaction is a D-aminoacyl-tRNA + H2O = a tRNA + a D-alpha-amino acid + H(+). Its function is as follows. An aminoacyl-tRNA editing enzyme that deacylates mischarged D-aminoacyl-tRNAs. Also deacylates mischarged glycyl-tRNA(Ala), protecting cells against glycine mischarging by AlaRS. Acts via tRNA-based rather than protein-based catalysis; rejects L-amino acids rather than detecting D-amino acids in the active site. By recycling D-aminoacyl-tRNA to D-amino acids and free tRNA molecules, this enzyme counteracts the toxicity associated with the formation of D-aminoacyl-tRNA entities in vivo and helps enforce protein L-homochirality. The protein is D-aminoacyl-tRNA deacylase of Pelobacter propionicus (strain DSM 2379 / NBRC 103807 / OttBd1).